A 278-amino-acid chain; its full sequence is Small ribosomal subunit protein uS2 (278 aa).

A disordered region spans residues 235–278 (AEAAEEAPKRERKAKAAVKKERTKKEDDDALNANVAGKFAKDEE). Positions 252-261 (VKKERTKKED) are enriched in basic and acidic residues.

Belongs to the universal ribosomal protein uS2 family.

The protein is Small ribosomal subunit protein uS2 of Parabacteroides distasonis (strain ATCC 8503 / DSM 20701 / CIP 104284 / JCM 5825 / NCTC 11152).